We begin with the raw amino-acid sequence, 71 residues long: uncharacterized protein (71 aa).

This is an uncharacterized protein from Acheta domesticus (House cricket).